The following is a 122-amino-acid chain: Small ribosomal subunit protein uS13 (122 aa).

The interval 94–122 is disordered; that stretch reads KQLPVRGQRTHTNARTRKGKAKPIAGKKK.

This sequence belongs to the universal ribosomal protein uS13 family. In terms of assembly, part of the 30S ribosomal subunit. Forms a loose heterodimer with protein S19. Forms two bridges to the 50S subunit in the 70S ribosome.

Functionally, located at the top of the head of the 30S subunit, it contacts several helices of the 16S rRNA. In the 70S ribosome it contacts the 23S rRNA (bridge B1a) and protein L5 of the 50S subunit (bridge B1b), connecting the 2 subunits; these bridges are implicated in subunit movement. Contacts the tRNAs in the A and P-sites. In Methylorubrum extorquens (strain PA1) (Methylobacterium extorquens), this protein is Small ribosomal subunit protein uS13.